The chain runs to 887 residues: 3-hydroxy-3-methylglutaryl-coenzyme A reductase (887 aa).

The Cytoplasmic portion of the chain corresponds to 1 to 9 (MLSRLFRMH). The helical transmembrane segment at 10-39 (GLFVASHPWEVIVGTVTLTICMMSMNMFTG) threads the bilayer. Residues 40 to 56 (NNKICGWNYECPKFEED) lie on the Lumenal side of the membrane. The helical transmembrane segment at 57–78 (VLSSDIIILTITRCIAILYIYF) threads the bilayer. The region spanning 61 to 218 (DIIILTITRC…MTFFPACVSL (158 aa)) is the SSD domain. Residues 75 to 78 (YIYF) carry the INSIG-binding motif motif. Residues 79–89 (QFQNLRQLGSK) lie on the Cytoplasmic side of the membrane. Lys89 participates in a covalent cross-link: Glycyl lysine isopeptide (Lys-Gly) (interchain with G-Cter in ubiquitin). Residues 90–114 (YILGIAGLFTIFSSFVFSTVVIHFL) form a helical membrane-spanning segment. The Lumenal segment spans residues 115–123 (DKELTGLNE). The helical transmembrane segment at 124-149 (ALPFFLLLIDLSRASALAKFALSSNS) threads the bilayer. Topologically, residues 150–159 (QDEVRENIAR) are cytoplasmic. The helical transmembrane segment at 160–187 (GMAILGPTFTLDALVECLVIGVGTMSGV) threads the bilayer. Residues 188–191 (RQLE) are Lumenal-facing. Residues 192 to 220 (IMCCFGCMSVLANYFVFMTFFPACVSLVL) traverse the membrane as a helical segment. At 221–248 (ELSRESREGRPIWQLSHFARVLEEEENK) the chain is on the cytoplasmic side. Lys248 participates in a covalent cross-link: Glycyl lysine isopeptide (Lys-Gly) (interchain with G-Cter in ubiquitin). A helical membrane pass occupies residues 249–275 (PNPVTQRVKMIMSLGLVLVHAHSRWIA). Residues 276–314 (DPSPQNSTAEQSKVSLGLAEDVSKRIEPSVSLWQFYLSK) are Lumenal-facing. Residue Asn281 is glycosylated (N-linked (GlcNAc...) asparagine). The chain crosses the membrane as a helical span at residues 315–339 (MISMDIEQVITLSLALLLAVKYIFF). Topologically, residues 340 to 887 (EQAETESTLS…LQGTCTKKAA (548 aa)) are cytoplasmic. Residues Glu558, Lys690, and Asp766 each act as charge relay system in the active site. His865 acts as the Proton donor in catalysis. At Ser871 the chain carries Phosphoserine; by AMPK.

The protein belongs to the HMG-CoA reductase family. As to quaternary structure, homotetramer. Homodimer. Interacts (via its SSD) with INSIG1; the interaction, accelerated by sterols, leads to the recruitment of HMGCR to AMFR/gp78 for its ubiquitination by the sterol-mediated ERAD pathway. Interacts with UBIAD1. Post-translationally, undergoes sterol-mediated ubiquitination and ER-associated degradation (ERAD). Accumulation of sterols in the endoplasmic reticulum (ER) membrane, triggers binding of the reductase to the ER membrane protein INSIG1 or INSIG2. The INSIG1 binding leads to the recruitment of the ubiquitin ligase, AMFR/gp78, RNF139 or RNF145, initiating ubiquitination of the reductase. The ubiquitinated reductase is then extracted from the ER membrane and delivered to cytosolic 26S proteosomes by a mechanism probably mediated by the ATPase Valosin-containing protein VCP/p97. The INSIG2-binding leads to the recruitment of the ubiquitin ligase RNF139, initiating ubiquitination of the reductase. Lys-248 is the main site of ubiquitination. Ubiquitination is enhanced by the presence of a geranylgeranylated protein. In terms of processing, N-glycosylated. Deglycosylated by NGLY1 on release from the endoplasmic reticulum (ER) in a sterol-mediated manner. Phosphorylated. Phosphorylation at Ser-871 reduces the catalytic activity.

It localises to the endoplasmic reticulum membrane. The protein resides in the peroxisome membrane. The enzyme catalyses (R)-mevalonate + 2 NADP(+) + CoA = (3S)-3-hydroxy-3-methylglutaryl-CoA + 2 NADPH + 2 H(+). The protein operates within metabolic intermediate biosynthesis; (R)-mevalonate biosynthesis; (R)-mevalonate from acetyl-CoA: step 3/3. Regulated by a negative feedback mechanism through sterols and non-sterol metabolites derived from mevalonate. Phosphorylation at Ser-871 down-regulates the catalytic activity. Catalyzes the conversion of (3S)-hydroxy-3-methylglutaryl-CoA (HMG-CoA) to mevalonic acid, the rate-limiting step in the synthesis of cholesterol and other isoprenoids, thus plays a critical role in cellular cholesterol homeostasis. The protein is 3-hydroxy-3-methylglutaryl-coenzyme A reductase (Hmgcr) of Rattus norvegicus (Rat).